The following is a 240-amino-acid chain: Ribonuclease HII (240 aa).

Positions 31–222 (RLIAGVDEAG…VRRALGLETA (192 aa)) constitute an RNase H type-2 domain. A divalent metal cation-binding residues include Asp37, Glu38, and Asp130.

This sequence belongs to the RNase HII family. Requires Mn(2+) as cofactor. It depends on Mg(2+) as a cofactor.

The protein resides in the cytoplasm. It carries out the reaction Endonucleolytic cleavage to 5'-phosphomonoester.. Functionally, endonuclease that specifically degrades the RNA of RNA-DNA hybrids. The protein is Ribonuclease HII of Xanthomonas campestris pv. campestris (strain B100).